Here is a 132-residue protein sequence, read N- to C-terminus: Large ribosomal subunit protein bL17 (132 aa).

The protein belongs to the bacterial ribosomal protein bL17 family. As to quaternary structure, part of the 50S ribosomal subunit. Contacts protein L32.

The polypeptide is Large ribosomal subunit protein bL17 (Albidiferax ferrireducens (strain ATCC BAA-621 / DSM 15236 / T118) (Rhodoferax ferrireducens)).